The following is a 235-amino-acid chain: Probable inactive serine protease 37 (235 aa).

Residues methionine 1 to serine 19 form the signal peptide. The 214-residue stretch at serine 20–lysine 233 folds into the Peptidase S1 domain. 3 disulfides stabilise this stretch: cysteine 40–cysteine 56, cysteine 131–cysteine 198, and cysteine 163–cysteine 177.

It belongs to the peptidase S1 family.

It is found in the cytoplasmic vesicle. The protein resides in the secretory vesicle. The protein localises to the acrosome. Its subcellular location is the secreted. Its function is as follows. Plays a role in male fertility. May have a role in sperm migration or binding to zona-intact eggs. Involved in the activation of the proacrosin/acrosin system. The polypeptide is Probable inactive serine protease 37 (Macaca fascicularis (Crab-eating macaque)).